We begin with the raw amino-acid sequence, 64 residues long: Large ribosomal subunit protein bL35 (64 aa).

Belongs to the bacterial ribosomal protein bL35 family.

This is Large ribosomal subunit protein bL35 from Vibrio parahaemolyticus serotype O3:K6 (strain RIMD 2210633).